We begin with the raw amino-acid sequence, 872 residues long: Leucine--tRNA ligase (872 aa).

The short motif at 42 to 52 (PYPSGSLHMGH) is the 'HIGH' region element. The 'KMSKS' region signature appears at 634 to 638 (TMSKS). ATP is bound at residue lysine 637.

It belongs to the class-I aminoacyl-tRNA synthetase family.

It localises to the cytoplasm. It carries out the reaction tRNA(Leu) + L-leucine + ATP = L-leucyl-tRNA(Leu) + AMP + diphosphate. This Nostoc sp. (strain PCC 7120 / SAG 25.82 / UTEX 2576) protein is Leucine--tRNA ligase.